The primary structure comprises 92 residues: Acylphosphatase (92 aa).

The 88-residue stretch at 5–92 (CIAAYVYGVV…ADFQGFSIRY (88 aa)) folds into the Acylphosphatase-like domain. Residues arginine 20 and asparagine 38 contribute to the active site.

It belongs to the acylphosphatase family.

The enzyme catalyses an acyl phosphate + H2O = a carboxylate + phosphate + H(+). This is Acylphosphatase (acyP) from Serratia proteamaculans (strain 568).